A 129-amino-acid polypeptide reads, in one-letter code: Large ribosomal subunit protein bL21 (129 aa).

This sequence belongs to the bacterial ribosomal protein bL21 family. Part of the 50S ribosomal subunit. Contacts protein L20.

In terms of biological role, this protein binds to 23S rRNA in the presence of protein L20. This is Large ribosomal subunit protein bL21 from Microcystis aeruginosa (strain NIES-843 / IAM M-2473).